The following is a 737-amino-acid chain: Delta and Notch-like epidermal growth factor-related receptor (737 aa).

Residues 1 to 25 (MPPRRAQAPGAPLLPVLALLPLLLG) form the signal peptide. Topologically, residues 26–640 (AGPQSGCLAS…LTNMPRHSLY (615 aa)) are extracellular. EGF-like domains are found at residues 44–92 (APGP…TYCQ) and 94–133 (VADP…LNCE). The segment at 44–133 (APGPCASQPC…NDGYEGLNCE (90 aa)) is interaction with NOTCH1. 6 disulfide bridges follow: cysteine 48/cysteine 59, cysteine 53/cysteine 80, cysteine 82/cysteine 91, cysteine 98/cysteine 108, cysteine 103/cysteine 121, and cysteine 123/cysteine 132. N-linked (GlcNAc...) asparagine glycosylation is present at asparagine 204. 5 EGF-like domains span residues 309 to 348 (PGDS…TFCE), 349 to 390 (EFDA…ELCQ), 392 to 428 (KIDY…SACE), 430 to 466 (KVDP…PTCA), and 468 to 503 (LVDF…LYCE). Intrachain disulfides connect cysteine 319/cysteine 336, cysteine 338/cysteine 347, cysteine 353/cysteine 364, cysteine 358/cysteine 378, cysteine 380/cysteine 389, cysteine 396/cysteine 407, cysteine 401/cysteine 416, cysteine 418/cysteine 427, cysteine 434/cysteine 445, cysteine 439/cysteine 454, cysteine 456/cysteine 465, cysteine 472/cysteine 482, cysteine 477/cysteine 491, cysteine 493/cysteine 502, cysteine 509/cysteine 520, cysteine 514/cysteine 529, cysteine 531/cysteine 540, cysteine 547/cysteine 558, cysteine 552/cysteine 567, cysteine 569/cysteine 578, cysteine 585/cysteine 596, cysteine 590/cysteine 605, and cysteine 607/cysteine 616. The EGF-like 8; calcium-binding domain occupies 505-541 (EYNECLSAPCLNAATCRDLINGYECVCLAEYKGTHCE). Residues 543-579 (YKDPCANISCLNGGTCDSEGLNGTCICAPGFTGEECD) enclose the EGF-like 9 domain. A glycan (N-linked (GlcNAc...) asparagine) is linked at asparagine 564. Residues 581–617 (DINECDSNPCHHAGTCLDQPNGYTCHCPHGWVGANCE) form the EGF-like 10; calcium-binding domain. Residues 641 to 661 (IIIGALCVAFILMLIILIVGI) form a helical membrane-spanning segment. Over 662 to 737 (CRISRIEYQG…LVTLIKTKDL (76 aa)) the chain is Cytoplasmic. The segment at 677–680 (YEEF) is interaction with AP1G1 and somatodendritic targeting. Residue serine 685 is modified to Phosphoserine. Residue tyrosine 711 is modified to Phosphotyrosine. The residue at position 714 (threonine 714) is a Phosphothreonine. Tyrosine 721 carries the post-translational modification Phosphotyrosine. A Phosphoserine modification is found at serine 722.

Interacts with AP1G1. Interacts with NOTCH1. N-glycosylated. Specifically expressed in brain neurons (at protein level).

Its subcellular location is the cell membrane. Functionally, mediates neuron-glia interaction during astrocytogenesis. May promote differentiation of Bergmann glia during cerebellar development by activating DELTEX-dependent NOTCH1 signaling. This chain is Delta and Notch-like epidermal growth factor-related receptor (Dner), found in Mus musculus (Mouse).